We begin with the raw amino-acid sequence, 363 residues long: DNA replication and repair protein RecF (363 aa).

30-37 (GSNGSGKT) is a binding site for ATP.

This sequence belongs to the RecF family.

The protein localises to the cytoplasm. In terms of biological role, the RecF protein is involved in DNA metabolism; it is required for DNA replication and normal SOS inducibility. RecF binds preferentially to single-stranded, linear DNA. It also seems to bind ATP. The chain is DNA replication and repair protein RecF from Photorhabdus laumondii subsp. laumondii (strain DSM 15139 / CIP 105565 / TT01) (Photorhabdus luminescens subsp. laumondii).